Reading from the N-terminus, the 446-residue chain is Tubulin beta-6 chain (446 aa).

An MREI motif motif is present at residues 1-4 (MREI). GTP-binding residues include Gln-11, Glu-69, Ser-138, Gly-142, Thr-143, Gly-144, Asn-204, and Asn-226. Residue Glu-69 coordinates Mg(2+). The disordered stretch occupies residues 419–446 (VSEYQQYQDATADVEEYEEAEASPEKET). Residues 430-440 (ADVEEYEEAEA) are compositionally biased toward acidic residues.

It belongs to the tubulin family. As to quaternary structure, dimer of alpha and beta chains. A typical microtubule is a hollow water-filled tube with an outer diameter of 25 nm and an inner diameter of 15 nM. Alpha-beta heterodimers associate head-to-tail to form protofilaments running lengthwise along the microtubule wall with the beta-tubulin subunit facing the microtubule plus end conferring a structural polarity. Microtubules usually have 13 protofilaments but different protofilament numbers can be found in some organisms and specialized cells. Mg(2+) is required as a cofactor. Post-translationally, some glutamate residues at the C-terminus are polyglycylated, resulting in polyglycine chains on the gamma-carboxyl group. Glycylation is mainly limited to tubulin incorporated into axonemes (cilia and flagella) whereas glutamylation is prevalent in neuronal cells, centrioles, axonemes, and the mitotic spindle. Both modifications can coexist on the same protein on adjacent residues, and lowering polyglycylation levels increases polyglutamylation, and reciprocally. The precise function of polyglycylation is still unclear. Some glutamate residues at the C-terminus are polyglutamylated, resulting in polyglutamate chains on the gamma-carboxyl group. Polyglutamylation plays a key role in microtubule severing by spastin (SPAST). SPAST preferentially recognizes and acts on microtubules decorated with short polyglutamate tails: severing activity by SPAST increases as the number of glutamates per tubulin rises from one to eight, but decreases beyond this glutamylation threshold. As to expression, highly expressed in bone marrow.

Its subcellular location is the cytoplasm. It localises to the cytoskeleton. Functionally, tubulin is the major constituent of microtubules, a cylinder consisting of laterally associated linear protofilaments composed of alpha- and beta-tubulin heterodimers. Microtubules grow by the addition of GTP-tubulin dimers to the microtubule end, where a stabilizing cap forms. Below the cap, tubulin dimers are in GDP-bound state, owing to GTPase activity of alpha-tubulin. The protein is Tubulin beta-6 chain of Gallus gallus (Chicken).